Here is a 252-residue protein sequence, read N- to C-terminus: Phosphoglycolate phosphatase (252 aa).

D13 acts as the Nucleophile in catalysis. The Mg(2+) site is built by D13, D15, and D192.

This sequence belongs to the HAD-like hydrolase superfamily. CbbY/CbbZ/Gph/YieH family. In terms of assembly, monomer. Requires Mg(2+) as cofactor. Chloride is required as a cofactor.

The enzyme catalyses 2-phosphoglycolate + H2O = glycolate + phosphate. It functions in the pathway organic acid metabolism; glycolate biosynthesis; glycolate from 2-phosphoglycolate: step 1/1. In terms of biological role, specifically catalyzes the dephosphorylation of 2-phosphoglycolate. Is involved in the dissimilation of the intracellular 2-phosphoglycolate formed during the DNA repair of 3'-phosphoglycolate ends, a major class of DNA lesions induced by oxidative stress. This chain is Phosphoglycolate phosphatase, found in Salmonella choleraesuis (strain SC-B67).